The primary structure comprises 238 residues: Probable transcriptional regulatory protein LACR_0237 (238 aa).

The protein belongs to the TACO1 family. YeeN subfamily.

Its subcellular location is the cytoplasm. The polypeptide is Probable transcriptional regulatory protein LACR_0237 (Lactococcus lactis subsp. cremoris (strain SK11)).